The primary structure comprises 1545 residues: Tricalbin-3 (1545 aa).

The tract at residues 1 to 89 is disordered; it reads MTGIKAQVHP…SNPEGKKQSS (89 aa). The Cytoplasmic segment spans residues 1–206; that stretch reads MTGIKAQVHP…AYILENFYND (206 aa). Polar residues predominate over residues 62 to 80; the sequence is TKTSNSVSDVSKGQKTADS. 2 positions are modified to phosphoserine: S67 and S112. The helical transmembrane segment at 207-227 threads the bilayer; sequence WYCNIATVLGTCFFSWLFAYI. Position 228 (G228) is a topological domain, extracellular. The chain crosses the membrane as a helical span at residues 229-249; it reads FSWWSMIFIFLGTATVYNAEY. Residues 250–1545 lie on the Cytoplasmic side of the membrane; sequence TRFNRNIRDD…VPEVPQEYTQ (1296 aa). The 208-residue stretch at 272-479 folds into the SMP-LTD domain; it reads RVESTTWLNS…PPNHLDINVE (208 aa). The region spanning 470–596 is the C2 1 domain; it reads PPNHLDINVE…LQNPVLDNQT (127 aa). Residues 620–660 are a coiled coil; the sequence is EDKSEEKAVERAEAKAKGKKEDENEDTTEKEEDENEESSQT. A compositionally biased stretch (basic and acidic residues) spans 624–641; the sequence is EEKAVERAEAKAKGKKED. Positions 624–660 are disordered; the sequence is EEKAVERAEAKAKGKKEDENEDTTEKEEDENEESSQT. Residues 642–658 are compositionally biased toward acidic residues; it reads ENEDTTEKEEDENEESS. C2 domains lie at 646-763 and 783-897; these read TTEK…AQEF and MTGA…SGKY. Residues 937 to 972 adopt a coiled-coil conformation; the sequence is SPEELVNVEKLEKELKEKKKKFEATQEENEQEMEKN. The C2 4 domain occupies 1119-1234; it reads PTSVKLPSSE…EVGKTYNWNL (116 aa). Ca(2+) contacts are provided by D1150, D1156, D1204, D1206, and D1212. Positions 1304–1404 are disordered; that stretch reads LLKSLGGNPM…NSRGHSRASS (101 aa). Over residues 1318-1328 the composition is skewed to polar residues; it reads SSNGNESNGAK. The segment covering 1329–1340 has biased composition (basic and acidic residues); that stretch reads KSSEKKSFDRRS. Phosphoserine occurs at positions 1340, 1342, and 1346. Polar residues predominate over residues 1341-1351; the sequence is PSNLNSTSVTP. T1350 is subject to Phosphothreonine. S1354 is subject to Phosphoserine. Positions 1361 to 1373 are enriched in polar residues; sequence VPNTSYAPVQSAS. Residues 1377-1404 are compositionally biased toward low complexity; it reads KPTDNTSSSSNKKDTPSSNSRGHSRASS. The C2 5 domain occupies 1396 to 1514; that stretch reads SRGHSRASSF…QQDGQISVKL (119 aa). S1400 is modified (phosphoserine).

The protein belongs to the tricalbin family. In terms of assembly, interacts with TCB2 via its C-terminal domain. Ca(2+) is required as a cofactor.

Its subcellular location is the cell membrane. It localises to the endoplasmic reticulum membrane. May play a role in membrane trafficking. This is Tricalbin-3 (TCB3) from Saccharomyces cerevisiae (strain ATCC 204508 / S288c) (Baker's yeast).